The chain runs to 309 residues: Homoserine O-succinyltransferase (309 aa).

Cys142 acts as the Acyl-thioester intermediate in catalysis. Substrate is bound by residues Lys163 and Ser192. The active-site Proton acceptor is His235. The active site involves Glu237. Arg249 provides a ligand contact to substrate.

It belongs to the MetA family.

It localises to the cytoplasm. The catalysed reaction is L-homoserine + succinyl-CoA = O-succinyl-L-homoserine + CoA. Its pathway is amino-acid biosynthesis; L-methionine biosynthesis via de novo pathway; O-succinyl-L-homoserine from L-homoserine: step 1/1. Transfers a succinyl group from succinyl-CoA to L-homoserine, forming succinyl-L-homoserine. In Photorhabdus laumondii subsp. laumondii (strain DSM 15139 / CIP 105565 / TT01) (Photorhabdus luminescens subsp. laumondii), this protein is Homoserine O-succinyltransferase.